The following is a 423-amino-acid chain: Serine--tRNA ligase (423 aa).

231 to 233 (TGE) contributes to the L-serine binding site. 262 to 264 (RSE) is an ATP binding site. Glu285 serves as a coordination point for L-serine. Residue 349–352 (EISS) participates in ATP binding. Residue Ser385 coordinates L-serine.

Belongs to the class-II aminoacyl-tRNA synthetase family. Type-1 seryl-tRNA synthetase subfamily. In terms of assembly, homodimer. The tRNA molecule binds across the dimer.

The protein resides in the cytoplasm. The enzyme catalyses tRNA(Ser) + L-serine + ATP = L-seryl-tRNA(Ser) + AMP + diphosphate + H(+). The catalysed reaction is tRNA(Sec) + L-serine + ATP = L-seryl-tRNA(Sec) + AMP + diphosphate + H(+). Its pathway is aminoacyl-tRNA biosynthesis; selenocysteinyl-tRNA(Sec) biosynthesis; L-seryl-tRNA(Sec) from L-serine and tRNA(Sec): step 1/1. Functionally, catalyzes the attachment of serine to tRNA(Ser). Is also able to aminoacylate tRNA(Sec) with serine, to form the misacylated tRNA L-seryl-tRNA(Sec), which will be further converted into selenocysteinyl-tRNA(Sec). The protein is Serine--tRNA ligase of Coxiella burnetii (strain RSA 331 / Henzerling II).